Consider the following 345-residue polypeptide: Cytoskeleton protein RodZ (345 aa).

Residues methionine 1–glycine 111 are Cytoplasmic-facing. The 61-residue stretch at leucine 19–leucine 79 folds into the HTH cro/C1-type domain. The H-T-H motif DNA-binding region spans glutamine 30 to glutamate 49. The chain crosses the membrane as a helical; Signal-anchor for type II membrane protein span at residues tryptophan 112 to tryptophan 132. At tryptophan 133 to glutamate 345 the chain is on the periplasmic side. Positions serine 151–glycine 260 are disordered. Positions proline 188–histidine 225 are enriched in polar residues. Residues alanine 229–glutamine 241 show a composition bias toward low complexity.

This sequence belongs to the RodZ family.

It localises to the cell inner membrane. Functionally, cytoskeletal protein that is involved in cell-shape control through regulation of the length of the long axis. The protein is Cytoskeleton protein RodZ of Yersinia pestis (strain Pestoides F).